We begin with the raw amino-acid sequence, 134 residues long: ATP synthase epsilon chain (134 aa).

This sequence belongs to the ATPase epsilon chain family. In terms of assembly, F-type ATPases have 2 components, CF(1) - the catalytic core - and CF(0) - the membrane proton channel. CF(1) has five subunits: alpha(3), beta(3), gamma(1), delta(1), epsilon(1). CF(0) has three main subunits: a, b and c.

The protein resides in the cell inner membrane. Its function is as follows. Produces ATP from ADP in the presence of a proton gradient across the membrane. This Sinorhizobium fredii (strain NBRC 101917 / NGR234) protein is ATP synthase epsilon chain.